The primary structure comprises 293 residues: 33 kDa chaperonin (293 aa).

Disulfide bonds link cysteine 237-cysteine 239 and cysteine 271-cysteine 274.

It belongs to the HSP33 family. Under oxidizing conditions two disulfide bonds are formed involving the reactive cysteines. Under reducing conditions zinc is bound to the reactive cysteines and the protein is inactive.

The protein localises to the cytoplasm. Functionally, redox regulated molecular chaperone. Protects both thermally unfolding and oxidatively damaged proteins from irreversible aggregation. Plays an important role in the bacterial defense system toward oxidative stress. The protein is 33 kDa chaperonin of Haemophilus influenzae (strain PittEE).